Here is a 361-residue protein sequence, read N- to C-terminus: Aurora kinase B-A (361 aa).

Residues 93 to 343 (FDIGRPLGKG…LKGVMEHPWV (251 aa)) form the Protein kinase domain. ATP-binding positions include 99 to 107 (LGKGKFGNV) and Lys122. Asp216 (proton acceptor) is an active-site residue.

This sequence belongs to the protein kinase superfamily. Ser/Thr protein kinase family. Aurora subfamily. In terms of assembly, component of the CPC at least composed of survivin/birc5, incenp, cdca8/borealin and/or cdca9/dasra-A, and aurkb/aurora-B. Interacts directly (via N-terminus and kinase domain) with incenp (via C terminus), and may weakly interact (via N-terminus) with birc5.1 to stabilize the complex. Interacts with mtus1. The cofactor is Mg(2+). Post-translationally, phosphorylated, stimulates kinase activity.

It localises to the nucleus. Its subcellular location is the chromosome. The catalysed reaction is L-seryl-[protein] + ATP = O-phospho-L-seryl-[protein] + ADP + H(+). It carries out the reaction L-threonyl-[protein] + ATP = O-phospho-L-threonyl-[protein] + ADP + H(+). Its activity is regulated as follows. Kinase activity is stimulated by both birc5/survivin-binding and cell-cycle specific phosphorylation. Serine/threonine-protein kinase component of the chromosomal passenger complex (CPC), a complex that acts as a key regulator of mitosis. The CPC complex has essential functions at the centromere in ensuring correct chromosome alignment and segregation and is required for chromatin-induced microtubule stabilization and spindle assembly. Involved in the bipolar attachment of spindle microtubules to kinetochores and is a key regulator for the onset of cytokinesis during mitosis. Required for central/midzone spindle assembly and cleavage furrow formation. Key component of the cytokinesis checkpoint, a process required to delay abscission to prevent both premature resolution of intercellular chromosome bridges and accumulation of DNA damage. Phosphorylates 'Ser-10' of histone H3 during mitosis. The protein is Aurora kinase B-A (aurkb-a) of Xenopus laevis (African clawed frog).